A 292-amino-acid chain; its full sequence is GTP cyclohydrolase FolE2 (292 aa).

Belongs to the GTP cyclohydrolase IV family.

It catalyses the reaction GTP + H2O = 7,8-dihydroneopterin 3'-triphosphate + formate + H(+). The protein operates within cofactor biosynthesis; 7,8-dihydroneopterin triphosphate biosynthesis; 7,8-dihydroneopterin triphosphate from GTP: step 1/1. In terms of biological role, converts GTP to 7,8-dihydroneopterin triphosphate. The sequence is that of GTP cyclohydrolase FolE2 from Staphylococcus epidermidis (strain ATCC 35984 / DSM 28319 / BCRC 17069 / CCUG 31568 / BM 3577 / RP62A).